The sequence spans 239 residues: Putative 3-methyladenine DNA glycosylase (239 aa).

This sequence belongs to the DNA glycosylase MPG family.

This Pseudomonas aeruginosa (strain ATCC 15692 / DSM 22644 / CIP 104116 / JCM 14847 / LMG 12228 / 1C / PRS 101 / PAO1) protein is Putative 3-methyladenine DNA glycosylase.